We begin with the raw amino-acid sequence, 438 residues long: tRNA modification GTPase MnmE (438 aa).

The (6S)-5-formyl-5,6,7,8-tetrahydrofolate site is built by Arg-20, Glu-76, and Lys-115. The region spanning 210–370 is the TrmE-type G domain; it reads NFTIMILGRR…LKCFINKIVD (161 aa). Asn-220 is a binding site for K(+). GTP is bound by residues 220–225, 239–245, and 264–267; these read NVGKST, TNIPGTT, and DTAG. Position 224 (Ser-224) interacts with Mg(2+). Residues Thr-239, Ile-241, and Thr-244 each contribute to the K(+) site. Thr-245 serves as a coordination point for Mg(2+). Lys-438 provides a ligand contact to (6S)-5-formyl-5,6,7,8-tetrahydrofolate.

It belongs to the TRAFAC class TrmE-Era-EngA-EngB-Septin-like GTPase superfamily. TrmE GTPase family. In terms of assembly, homodimer. Heterotetramer of two MnmE and two MnmG subunits. The cofactor is K(+).

It is found in the cytoplasm. Exhibits a very high intrinsic GTPase hydrolysis rate. Involved in the addition of a carboxymethylaminomethyl (cmnm) group at the wobble position (U34) of certain tRNAs, forming tRNA-cmnm(5)s(2)U34. This is tRNA modification GTPase MnmE from Carsonella ruddii (strain PV).